Reading from the N-terminus, the 153-residue chain is Large ribosomal subunit protein bL9 (153 aa).

It belongs to the bacterial ribosomal protein bL9 family.

Functionally, binds to the 23S rRNA. The sequence is that of Large ribosomal subunit protein bL9 from Blochmanniella pennsylvanica (strain BPEN).